A 701-amino-acid chain; its full sequence is E3 ubiquitin-protein ligase RNF19B (701 aa).

The tract at residues 1–97 (MGSEKDSESP…PAEPLSTSQA (97 aa)) is disordered. Positions 1-304 (MGSEKDSESP…VCGCEFCWLC (304 aa)) are required for ubiquitin ligase activity and for protection against staurosporin-induced cell death. Residues 57–72 (QQLHQQQQIQQQQLLQ) are compositionally biased toward low complexity. Residues 103 to 323 (ELLECPLCLV…LSPSGCTFWG (221 aa)) form a TRIAD supradomain region. Zn(2+)-binding residues include Cys107, Cys110, Cys130, Cys133, Cys194, Cys199, Cys216, Cys221, Cys226, Cys229, His234, Cys239, Cys273, and Cys276. The RING-type 1 zinc finger occupies 107–156 (CPLCLVRQPAEQLPELQGCSHRSCLCCLRQYLRIEITESRVQLSCPECAE). The IBR-type zinc finger occupies 174-239 (EKYEEFLLRR…KQAWHPNQTC (66 aa)). The segment at 273–304 (CPRCGAYIIKMNDGSCNHMTCAVCGCEFCWLC) adopts an RING-type 2; atypical zinc-finger fold. Cys288 is an active-site residue. Zn(2+) is bound by residues Cys293, Cys296, Cys301, Cys304, His312, and Cys319. A run of 2 helical transmembrane segments spans residues 340 to 360 (LIGA…AMVI) and 396 to 416 (IITA…IMLA). 2 disordered regions span residues 472–495 (LEGA…PGGL) and 658–677 (AELT…HGAP).

It belongs to the RBR family. RNF19 subfamily. In terms of assembly, interacts with UBE2L3, UBE2L6 and UCKL1.

It localises to the cytoplasmic granule membrane. The protein localises to the endoplasmic reticulum membrane. It catalyses the reaction [E2 ubiquitin-conjugating enzyme]-S-ubiquitinyl-L-cysteine + [acceptor protein]-L-lysine = [E2 ubiquitin-conjugating enzyme]-L-cysteine + [acceptor protein]-N(6)-ubiquitinyl-L-lysine.. It participates in protein modification; protein ubiquitination. E3 ubiquitin-protein ligase which accepts ubiquitin from E2 ubiquitin-conjugating enzymes UBE2L3 and UBE2L6 in the form of a thioester and then directly transfers the ubiquitin to targeted substrates, such as UCKL1. Involved in the cytolytic activity of natural killer cells and cytotoxic T-cells. Protects against staurosporin-induced cell death. The protein is E3 ubiquitin-protein ligase RNF19B (rnf19b) of Danio rerio (Zebrafish).